Here is a 129-residue protein sequence, read N- to C-terminus: Cytochrome c oxidase subunit 5B, mitochondrial (129 aa).

Residues 1 to 31 (MASRLLRGAGTLAAQALRARGPSGAAAMRSM) constitute a mitochondrion transit peptide. Lysine 68 and lysine 86 each carry N6-acetyllysine. Zn(2+) is bound by residues cysteine 91, cysteine 93, cysteine 113, and cysteine 116. Lysine 121 is subject to N6-acetyllysine.

The protein belongs to the cytochrome c oxidase subunit 5B family. As to quaternary structure, component of the cytochrome c oxidase (complex IV, CIV), a multisubunit enzyme composed of 14 subunits. The complex is composed of a catalytic core of 3 subunits MT-CO1, MT-CO2 and MT-CO3, encoded in the mitochondrial DNA, and 11 supernumerary subunits COX4I1 (or COX4I2), COX5A, COX5B, COX6A1 (or COX6A2), COX6B1 (or COX6B2), COX6C, COX7A2 (or COX7A1), COX7B, COX7C, COX8A and NDUFA4, which are encoded in the nuclear genome. The complex exists as a monomer or a dimer and forms supercomplexes (SCs) in the inner mitochondrial membrane with NADH-ubiquinone oxidoreductase (complex I, CI) and ubiquinol-cytochrome c oxidoreductase (cytochrome b-c1 complex, complex III, CIII), resulting in different assemblies (supercomplex SCI(1)III(2)IV(1) and megacomplex MCI(2)III(2)IV(2)).

Its subcellular location is the mitochondrion inner membrane. Its pathway is energy metabolism; oxidative phosphorylation. In terms of biological role, component of the cytochrome c oxidase, the last enzyme in the mitochondrial electron transport chain which drives oxidative phosphorylation. The respiratory chain contains 3 multisubunit complexes succinate dehydrogenase (complex II, CII), ubiquinol-cytochrome c oxidoreductase (cytochrome b-c1 complex, complex III, CIII) and cytochrome c oxidase (complex IV, CIV), that cooperate to transfer electrons derived from NADH and succinate to molecular oxygen, creating an electrochemical gradient over the inner membrane that drives transmembrane transport and the ATP synthase. Cytochrome c oxidase is the component of the respiratory chain that catalyzes the reduction of oxygen to water. Electrons originating from reduced cytochrome c in the intermembrane space (IMS) are transferred via the dinuclear copper A center (CU(A)) of subunit 2 and heme A of subunit 1 to the active site in subunit 1, a binuclear center (BNC) formed by heme A3 and copper B (CU(B)). The BNC reduces molecular oxygen to 2 water molecules using 4 electrons from cytochrome c in the IMS and 4 protons from the mitochondrial matrix. This is Cytochrome c oxidase subunit 5B, mitochondrial (COX5B) from Homo sapiens (Human).